A 135-amino-acid polypeptide reads, in one-letter code: DNA-binding protein inhibitor ID-2-B (135 aa).

In terms of domain architecture, bHLH spans 23-75; that stretch reads ARSKAPVDEPMSLLYNMNDCYSKLKELVPSIPPNKKVSKMEILQHVIDYILDL. The Nuclear export signal motif lies at 108–117; the sequence is LNTDISILSL.

As to quaternary structure, heterodimer with other HLH proteins.

Its subcellular location is the cytoplasm. It is found in the nucleus. Transcriptional regulator (lacking a basic DNA binding domain) which negatively regulates the basic helix-loop-helix (bHLH) transcription factors by forming heterodimers and inhibiting their DNA binding and transcriptional activity. Inhibits the activity of both neurogenic (neurod1/neuroD) and myogenic (myod1/myoD) bHLH factors. May play a role in the regulation of the circadian clock. The sequence is that of DNA-binding protein inhibitor ID-2-B (id2-b) from Xenopus laevis (African clawed frog).